Here is a 381-residue protein sequence, read N- to C-terminus: Tryptophan--tRNA ligase (381 aa).

The 'HIGH' region motif lies at 82-90 (PSLGMHIGH). The short motif at 254–258 (KMSSS) is the 'KMSKS' region element.

It belongs to the class-I aminoacyl-tRNA synthetase family.

The protein resides in the cytoplasm. It catalyses the reaction tRNA(Trp) + L-tryptophan + ATP = L-tryptophyl-tRNA(Trp) + AMP + diphosphate + H(+). The chain is Tryptophan--tRNA ligase from Sulfurisphaera tokodaii (strain DSM 16993 / JCM 10545 / NBRC 100140 / 7) (Sulfolobus tokodaii).